The following is a 320-amino-acid chain: ATP-dependent 6-phosphofructokinase (320 aa).

Gly11 contacts ATP. 21–25 (RAVVR) lines the ADP pocket. ATP contacts are provided by residues 72–73 (RY) and 102–105 (GDGS). Mg(2+) is bound at residue Asp103. 125–127 (TID) serves as a coordination point for substrate. Asp127 acts as the Proton acceptor in catalysis. Arg154 contributes to the ADP binding site. Substrate contacts are provided by residues Arg162 and 169–171 (MGR). ADP contacts are provided by residues 185–187 (GAD), Arg211, and 213–215 (KKH). Residues Glu222, Arg243, and 249–252 (HVVR) each bind substrate.

It belongs to the phosphofructokinase type A (PFKA) family. ATP-dependent PFK group I subfamily. Prokaryotic clade 'B1' sub-subfamily. Homotetramer. Requires Mg(2+) as cofactor.

Its subcellular location is the cytoplasm. It carries out the reaction beta-D-fructose 6-phosphate + ATP = beta-D-fructose 1,6-bisphosphate + ADP + H(+). It participates in carbohydrate degradation; glycolysis; D-glyceraldehyde 3-phosphate and glycerone phosphate from D-glucose: step 3/4. Allosterically activated by ADP and other diphosphonucleosides, and allosterically inhibited by phosphoenolpyruvate. Functionally, catalyzes the phosphorylation of D-fructose 6-phosphate to fructose 1,6-bisphosphate by ATP, the first committing step of glycolysis. The polypeptide is ATP-dependent 6-phosphofructokinase (Enterococcus faecalis (strain ATCC 700802 / V583)).